The sequence spans 1078 residues: Zinc finger protein 827 (1078 aa).

The segment covering 1 to 10 (MPRRKQEQPK) has biased composition (basic and acidic residues). The tract at residues 1-14 (MPRRKQEQPKRLPS) is mediates direct interaction with RBBP4. The segment at 1–76 (MPRRKQEQPK…PDTSLGSATP (76 aa)) is disordered. Residues 3-5 (RRK) carry the RRK motif; mediates NuRD recruitment to telomeres motif. Polar residues-rich tracts occupy residues 33–42 (YGNSSETPSE) and 62–76 (EQSTSPDTSLGSATP). Glycyl lysine isopeptide (Lys-Gly) (interchain with G-Cter in SUMO2) cross-links involve residues Lys-175, Lys-215, and Lys-225. Residues 307–341 (SLLPDDPLPLPSSEKKPEKVTPPPPPPPPTAQPPQ) form a disordered region. The segment covering 326–338 (VTPPPPPPPPTAQ) has biased composition (pro residues). Residues Lys-357 and Lys-369 each participate in a glycyl lysine isopeptide (Lys-Gly) (interchain with G-Cter in SUMO2) cross-link. 3 C2H2-type zinc fingers span residues 371 to 393 (FQCPICGLVIKRKSYWKRHMVIH), 399 to 421 (HQCPLCPFRCARKDNLKSHMKVH), and 430 to 452 (FQCQLCPFTSSRHFSLKLHMRCH). Glycyl lysine isopeptide (Lys-Gly) (interchain with G-Cter in SUMO2) cross-links involve residues Lys-463, Lys-472, Lys-520, Lys-546, Lys-577, Lys-584, and Lys-594. The segment at 466-490 (IPDPDVKGSPHLSDSGCLGQQREGG) is disordered. The tract at residues 594–640 (KEEPKEEESLSMPLPRSSYVFSPEPEVSTPSVSEDPLTPQEGKGSVL) is disordered. Low complexity predominate over residues 613–627 (VFSPEPEVSTPSVSE). Glycyl lysine isopeptide (Lys-Gly) (interchain with G-Cter in SUMO2) cross-links involve residues Lys-636 and Lys-655. Residue Lys-670 forms a Glycyl lysine isopeptide (Lys-Gly) (interchain with G-Cter in SUMO1); alternate linkage. Lys-670 participates in a covalent cross-link: Glycyl lysine isopeptide (Lys-Gly) (interchain with G-Cter in SUMO2); alternate. Residues Lys-701, Lys-707, Lys-739, Lys-775, and Lys-795 each participate in a glycyl lysine isopeptide (Lys-Gly) (interchain with G-Cter in SUMO2) cross-link. 2 consecutive C2H2-type zinc fingers follow at residues 814–836 (FPCDVCGKVFGRQQTLSRHLSLH) and 842–864 (YKCHLCPYAAKCRANLNQHLTVH). Residues Lys-867 and Lys-888 each participate in a glycyl lysine isopeptide (Lys-Gly) (interchain with G-Cter in SUMO2) cross-link. 2 consecutive C2H2-type zinc fingers follow at residues 894 to 916 (YSCHVCGFETELNVQFVSHMSLH) and 926 to 949 (ICCTACDFVTMEEAEIKTHIGTKH). The segment covering 945–957 (IGTKHTGDDRKTP) has biased composition (basic and acidic residues). The segment at 945–990 (IGTKHTGDDRKTPSESNSPSSSSLSTLSDSANGKDDSDSSQKNKGG) is disordered. Residue Lys-955 forms a Glycyl lysine isopeptide (Lys-Gly) (interchain with G-Cter in SUMO2) linkage. Residues 958 to 974 (SESNSPSSSSLSTLSDS) show a composition bias toward low complexity. The segment covering 976–985 (NGKDDSDSSQ) has biased composition (basic and acidic residues). Lys-1011 participates in a covalent cross-link: Glycyl lysine isopeptide (Lys-Gly) (interchain with G-Cter in SUMO2). C2H2-type zinc fingers lie at residues 1016-1038 (FECVFCNFVCKTKNMFERHLQIH) and 1044-1066 (FECDVCHKFMKTPEQLLEHKKCH).

It belongs to the krueppel C2H2-type zinc-finger protein family. Part of a transcription inhibitory ribonucleoprotein complex composed at least of the circular RNA circZNF827, HNRNPK and HNRNPL. Interacts with the nucleosome remodeling and histone deacetylase/NuRD complex. Interacts with RBBP4; the interaction is direct and recruits RBBP4, a component of the NuRD complex, to telomeres.

It is found in the nucleus. Its subcellular location is the chromosome. The protein localises to the telomere. Its function is as follows. As part of a ribonucleoprotein complex composed at least of HNRNPK, HNRNPL and the circular RNA circZNF827 that nucleates the complex on chromatin, may negatively regulate the transcription of genes involved in neuronal differentiation. Could also recruit the nucleosome remodeling and histone deacetylase/NuRD complex to telomeric regions of chromosomes to regulate chromatin remodeling as part of telomere maintenance. The polypeptide is Zinc finger protein 827 (Znf827) (Mus musculus (Mouse)).